Here is a 328-residue protein sequence, read N- to C-terminus: Malate dehydrogenase (328 aa).

12-18 (GAAGQIG) lines the NAD(+) pocket. Arginine 95 and arginine 101 together coordinate substrate. NAD(+) is bound by residues asparagine 108, glutamine 115, and 132-134 (VGN). Substrate contacts are provided by asparagine 134 and arginine 165. Histidine 190 serves as the catalytic Proton acceptor.

Belongs to the LDH/MDH superfamily. MDH type 2 family.

It catalyses the reaction (S)-malate + NAD(+) = oxaloacetate + NADH + H(+). In terms of biological role, catalyzes the reversible oxidation of malate to oxaloacetate. This is Malate dehydrogenase from Delftia acidovorans (strain DSM 14801 / SPH-1).